The following is a 256-amino-acid chain: Homeobox-leucine zipper protein HOX18 (256 aa).

The disordered stretch occupies residues 52 to 117; the sequence is YDHGRDEEQA…GGGGGTRKKL (66 aa). Residues 102 to 112 show a composition bias toward gly residues; sequence DGGSGSGGGGG. The segment at residues 112-171 is a DNA-binding region (homeobox); that stretch reads GTRKKLQLTKEQSTLLEDSFRVHNILSHAQKHELARQLKLKPRQVEVWFQNRRARTKLKQ. Residues 170–214 form a leucine-zipper region; sequence KQTEVDCEFLKRCCESLTEENKQLKHELMELRRLASAAAAAAGSQ.

It belongs to the HD-ZIP homeobox family. Class II subfamily. Expressed in roots, leaf sheaths and blades and panicles.

The protein resides in the nucleus. Probable transcription factor. In Oryza sativa subsp. indica (Rice), this protein is Homeobox-leucine zipper protein HOX18 (HOX18).